Here is a 208-residue protein sequence, read N- to C-terminus: Uracil phosphoribosyltransferase (208 aa).

5-phospho-alpha-D-ribose 1-diphosphate is bound by residues R78, R103, and 130–138 (DPMLATGGS). Uracil is bound by residues I193 and 198-200 (GDA). D199 is a binding site for 5-phospho-alpha-D-ribose 1-diphosphate.

It belongs to the UPRTase family. Mg(2+) serves as cofactor.

It carries out the reaction UMP + diphosphate = 5-phospho-alpha-D-ribose 1-diphosphate + uracil. The protein operates within pyrimidine metabolism; UMP biosynthesis via salvage pathway; UMP from uracil: step 1/1. Its activity is regulated as follows. Allosterically activated by GTP. Functionally, catalyzes the conversion of uracil and 5-phospho-alpha-D-ribose 1-diphosphate (PRPP) to UMP and diphosphate. The polypeptide is Uracil phosphoribosyltransferase (Neisseria gonorrhoeae (strain ATCC 700825 / FA 1090)).